The chain runs to 345 residues: GDP-mannose transporter (345 aa).

Residues 1-8 are Cytoplasmic-facing; sequence MDNHMLNR. A helical transmembrane segment spans residues 9 to 29; that stretch reads ISKSPILPVVSYCMASILMTL. At 30-40 the chain is on the lumenal side; that stretch reads TNKYVLSSPGY. A helical membrane pass occupies residues 41-61; it reads NMNFLLLTVQSTVCVAAIGIL. Residues 62 to 78 lie on the Cytoplasmic side of the membrane; the sequence is KRLKVINYRDFDFREAK. A helical transmembrane segment spans residues 79–101; that stretch reads FWFPISFLLVAMIYTASKALQFL. Residues 102-104 are Lumenal-facing; sequence SVP. A helical membrane pass occupies residues 105–127; that stretch reads VYTIFKNLTIIIIAYGEVLWFGG. At 128-131 the chain is on the cytoplasmic side; that stretch reads HVTA. Residues 132-150 form a helical membrane-spanning segment; it reads LTLFSFGLMVLSSIVAAWA. Residues 151–161 are Lumenal-facing; the sequence is DIQSSSFASQT. Residues 162-182 traverse the membrane as a helical segment; the sequence is LNSGYLWMVLNCLTNAAFVLA. Residues 183–194 lie on the Cytoplasmic side of the membrane; that stretch reads MRKRIKLTNFRD. A helical transmembrane segment spans residues 195-215; that stretch reads FDTMFYNNLLSIPVLVICTLF. Residues 216 to 233 are Lumenal-facing; that stretch reads TEDWSAENIAQNFPPDAK. Residues 234-254 traverse the membrane as a helical segment; it reads FGVLMAMAISGVSSVGISYTS. At 255–264 the chain is on the cytoplasmic side; sequence AWCVRVTSST. The chain crosses the membrane as a helical span at residues 265 to 285; sequence TYSMVGALNKLPLAIAGLVFF. Over 286–288 the chain is Lumenal; that stretch reads DAP. Residues 289-309 form a helical membrane-spanning segment; sequence ITFGSVTAILLGFISGVVYAV. Residues 310–345 lie on the Cytoplasmic side of the membrane; the sequence is AKSQQQRQKDPATILPMTHNPVSASSQSMRDSLSKS. The tract at residues 319–345 is disordered; the sequence is DPATILPMTHNPVSASSQSMRDSLSKS. Polar residues predominate over residues 329 to 345; sequence NPVSASSQSMRDSLSKS.

It belongs to the TPT transporter family. SLC35D subfamily. As to quaternary structure, homooligomer.

Its subcellular location is the golgi apparatus membrane. The protein resides in the cytoplasmic vesicle membrane. The protein localises to the endoplasmic reticulum membrane. Functionally, involved in the import of GDP-mannose from the cytoplasm into the Golgi lumen. The protein is GDP-mannose transporter (vrg4) of Schizosaccharomyces pombe (strain 972 / ATCC 24843) (Fission yeast).